Reading from the N-terminus, the 85-residue chain is Translation initiation factor IF-1 2 (85 aa).

Residues 1–72 (MAKEELIEMQ…TKGRITFRHL (72 aa)) form the S1-like domain.

This sequence belongs to the IF-1 family. Component of the 30S ribosomal translation pre-initiation complex which assembles on the 30S ribosome in the order IF-2 and IF-3, IF-1 and N-formylmethionyl-tRNA(fMet); mRNA recruitment can occur at any time during PIC assembly.

It localises to the cytoplasm. Its function is as follows. One of the essential components for the initiation of protein synthesis. Stabilizes the binding of IF-2 and IF-3 on the 30S subunit to which N-formylmethionyl-tRNA(fMet) subsequently binds. Helps modulate mRNA selection, yielding the 30S pre-initiation complex (PIC). Upon addition of the 50S ribosomal subunit IF-1, IF-2 and IF-3 are released leaving the mature 70S translation initiation complex. In Paracidovorax citrulli (strain AAC00-1) (Acidovorax citrulli), this protein is Translation initiation factor IF-1 2.